We begin with the raw amino-acid sequence, 273 residues long: MHEAQIRVAIAGAGGRMGRQLIQAAMAMEGVQLGAALEREGSSLLGSDAGELAGGGKSGVIVQSSLEAVKDDFDVFIDFTRPEGTLTHLAFCRQHGKGMVIGTTGFDDAGKQAIREASQEIAIVFAANFSVGVNVMLKLLEKAAKVMGDYSDIEIIEAHHRHKVDAPSGTALAMGEAIAGALDKNLKDCAVYSREGYTGERVPGTIGFATVRAGDIVGEHTAMFADIGERVEITHKASSRMTFANGALRSALWLKTKKNGLFDMRDVLGLDVL.

NAD(+) is bound by residues 12 to 17 (GAGGRM) and glutamate 38. An NADP(+)-binding site is contributed by arginine 39. Residues 102 to 104 (GTT) and 126 to 129 (AANF) each bind NAD(+). The Proton donor/acceptor role is filled by histidine 159. Histidine 160 contacts (S)-2,3,4,5-tetrahydrodipicolinate. Lysine 163 functions as the Proton donor in the catalytic mechanism. 169-170 (GT) is a binding site for (S)-2,3,4,5-tetrahydrodipicolinate.

The protein belongs to the DapB family. In terms of assembly, homotetramer.

It localises to the cytoplasm. It carries out the reaction (S)-2,3,4,5-tetrahydrodipicolinate + NAD(+) + H2O = (2S,4S)-4-hydroxy-2,3,4,5-tetrahydrodipicolinate + NADH + H(+). The enzyme catalyses (S)-2,3,4,5-tetrahydrodipicolinate + NADP(+) + H2O = (2S,4S)-4-hydroxy-2,3,4,5-tetrahydrodipicolinate + NADPH + H(+). It participates in amino-acid biosynthesis; L-lysine biosynthesis via DAP pathway; (S)-tetrahydrodipicolinate from L-aspartate: step 4/4. Catalyzes the conversion of 4-hydroxy-tetrahydrodipicolinate (HTPA) to tetrahydrodipicolinate. This chain is 4-hydroxy-tetrahydrodipicolinate reductase, found in Salmonella enteritidis PT4 (strain P125109).